Here is a 345-residue protein sequence, read N- to C-terminus: Neurotrimin (345 aa).

An N-terminal signal peptide occupies residues 1 to 30; it reads MGVCGSLFLPWKCLVVVSLRLLFLVPTGVP. Ig-like C2-type domains lie at 39–126, 136–218, and 222–309; these read PKAM…PKTS, PKIV…VKVT, and PPYI…ASIT. N-linked (GlcNAc...) asparagine glycans are attached at residues Asn44, Asn70, and Asn152. A disulfide bond links Cys57 and Cys115. Intrachain disulfides connect Cys157–Cys201 and Cys243–Cys295. Asn284, Asn292, Asn305, and Asn321 each carry an N-linked (GlcNAc...) asparagine glycan. Asn321 carries the GPI-anchor amidated asparagine lipid modification. A propeptide spans 322–345 (removed in mature form); it reads GTSSRRAGCLWLLPLLVLHLLLKF.

The protein belongs to the immunoglobulin superfamily. IgLON family.

The protein resides in the cell membrane. Neural cell adhesion molecule. The polypeptide is Neurotrimin (NTM) (Bos taurus (Bovine)).